A 269-amino-acid polypeptide reads, in one-letter code: Formamidopyrimidine-DNA glycosylase (269 aa).

Pro-2 acts as the Schiff-base intermediate with DNA in catalysis. The active-site Proton donor is Glu-3. The active-site Proton donor; for beta-elimination activity is the Lys-57. DNA is bound by residues His-90, Arg-109, and Lys-150. Residues 235-269 form an FPG-type zinc finger; that stretch reads QVYGREGEPCRVCGTPILAGKHAQRRTYWCRRCQK. The Proton donor; for delta-elimination activity role is filled by Arg-259.

This sequence belongs to the FPG family. As to quaternary structure, monomer. Zn(2+) is required as a cofactor.

It catalyses the reaction Hydrolysis of DNA containing ring-opened 7-methylguanine residues, releasing 2,6-diamino-4-hydroxy-5-(N-methyl)formamidopyrimidine.. It carries out the reaction 2'-deoxyribonucleotide-(2'-deoxyribose 5'-phosphate)-2'-deoxyribonucleotide-DNA = a 3'-end 2'-deoxyribonucleotide-(2,3-dehydro-2,3-deoxyribose 5'-phosphate)-DNA + a 5'-end 5'-phospho-2'-deoxyribonucleoside-DNA + H(+). Functionally, involved in base excision repair of DNA damaged by oxidation or by mutagenic agents. Acts as a DNA glycosylase that recognizes and removes damaged bases. Has a preference for oxidized purines, such as 7,8-dihydro-8-oxoguanine (8-oxoG). Has AP (apurinic/apyrimidinic) lyase activity and introduces nicks in the DNA strand. Cleaves the DNA backbone by beta-delta elimination to generate a single-strand break at the site of the removed base with both 3'- and 5'-phosphates. The polypeptide is Formamidopyrimidine-DNA glycosylase (Cronobacter sakazakii (strain ATCC BAA-894) (Enterobacter sakazakii)).